Reading from the N-terminus, the 428-residue chain is 3-phosphoshikimate 1-carboxyvinyltransferase (428 aa).

The 3-phosphoshikimate site is built by Lys21, Ser22, and Arg26. A phosphoenolpyruvate-binding site is contributed by Lys21. Gly91 and Arg119 together coordinate phosphoenolpyruvate. The 3-phosphoshikimate site is built by Ser164, Gln166, Asp313, and Lys340. Residue Gln166 coordinates phosphoenolpyruvate. Asp313 (proton acceptor) is an active-site residue. Phosphoenolpyruvate-binding residues include Arg344 and Arg386.

The protein belongs to the EPSP synthase family. As to quaternary structure, monomer.

It is found in the cytoplasm. The enzyme catalyses 3-phosphoshikimate + phosphoenolpyruvate = 5-O-(1-carboxyvinyl)-3-phosphoshikimate + phosphate. Its pathway is metabolic intermediate biosynthesis; chorismate biosynthesis; chorismate from D-erythrose 4-phosphate and phosphoenolpyruvate: step 6/7. Its function is as follows. Catalyzes the transfer of the enolpyruvyl moiety of phosphoenolpyruvate (PEP) to the 5-hydroxyl of shikimate-3-phosphate (S3P) to produce enolpyruvyl shikimate-3-phosphate and inorganic phosphate. The sequence is that of 3-phosphoshikimate 1-carboxyvinyltransferase from Campylobacter jejuni subsp. jejuni serotype O:6 (strain 81116 / NCTC 11828).